Here is a 212-residue protein sequence, read N- to C-terminus: Thymidylate kinase (212 aa).

10-17 (GPDGSGKS) serves as a coordination point for ATP.

Belongs to the thymidylate kinase family.

It carries out the reaction dTMP + ATP = dTDP + ADP. In terms of biological role, phosphorylation of dTMP to form dTDP in both de novo and salvage pathways of dTTP synthesis. The chain is Thymidylate kinase from Exiguobacterium sp. (strain ATCC BAA-1283 / AT1b).